Here is a 430-residue protein sequence, read N- to C-terminus: Phosphomethylpyrimidine synthase (430 aa).

Substrate-binding positions include N67, M96, Y125, H161, S183–G185, D224–R227, and E263. Position 267 (H267) interacts with Zn(2+). Y290 serves as a coordination point for substrate. Position 331 (H331) interacts with Zn(2+). 3 residues coordinate [4Fe-4S] cluster: C406, C409, and C413.

Belongs to the ThiC family. As to quaternary structure, homodimer. [4Fe-4S] cluster serves as cofactor.

The catalysed reaction is 5-amino-1-(5-phospho-beta-D-ribosyl)imidazole + S-adenosyl-L-methionine = 4-amino-2-methyl-5-(phosphooxymethyl)pyrimidine + CO + 5'-deoxyadenosine + formate + L-methionine + 3 H(+). It functions in the pathway cofactor biosynthesis; thiamine diphosphate biosynthesis. In terms of biological role, catalyzes the synthesis of the hydroxymethylpyrimidine phosphate (HMP-P) moiety of thiamine from aminoimidazole ribotide (AIR) in a radical S-adenosyl-L-methionine (SAM)-dependent reaction. The polypeptide is Phosphomethylpyrimidine synthase (Campylobacter jejuni subsp. jejuni serotype O:6 (strain 81116 / NCTC 11828)).